We begin with the raw amino-acid sequence, 493 residues long: Solute carrier family 2, facilitated glucose transporter member 3 (493 aa).

At 1–10 (MGTAKVTPSL) the chain is on the cytoplasmic side. A helical transmembrane segment spans residues 11–32 (VFAVTVATIGSFQFGYNTGVIN). Residues 33–64 (APETIIKDFLNYTLEERLEDLPREGLLTTLWS) lie on the Extracellular side of the membrane. Asparagine 43 carries an N-linked (GlcNAc...) asparagine glycan. A helical membrane pass occupies residues 65–85 (LCVAIFSVGGMIGSFSVGLFV). At 86-90 (NRFGR) the chain is on the cytoplasmic side. The chain crosses the membrane as a helical span at residues 91–111 (RNSMLLVNLIAILGGCLMGFA). At 112 to 118 (KIAESVE) the chain is on the extracellular side. A helical transmembrane segment spans residues 119–142 (MLILGRLIIGIFCGLCTGFVPMYI). The Cytoplasmic segment spans residues 143–153 (GEVSPTALRGA). The chain crosses the membrane as a helical span at residues 154–174 (FGTLNQLGIVVGILVAQVFGL). D-glucose is bound at residue glutamine 159. Topologically, residues 175-183 (DFILGSEEL) are extracellular. The helical transmembrane segment at 184–204 (WPGLLGLTIIPAILQSAALPF) threads the bilayer. The Cytoplasmic portion of the chain corresponds to 205 to 269 (CPESPRFLLI…LFKSPSYFQP (65 aa)). Threonine 232 is subject to Phosphothreonine. Residues 270–290 (LLISVVLQLSQQFSGINAVFY) traverse the membrane as a helical segment. The interval 277 to 279 (QLS) is important for selectivity against fructose. D-glucose contacts are provided by residues 280–281 (QQ) and asparagine 286. Residues 291 to 304 (YSTGIFQDAGVQEP) lie on the Extracellular side of the membrane. The helical transmembrane segment at 305-325 (IYATIGAGVVNTIFTVVSLFL) threads the bilayer. Asparagine 315 is a binding site for D-glucose. The Cytoplasmic segment spans residues 326 to 331 (VERAGR). Residues 332-352 (RTLHMIGLGGMAVCSVFMTIS) form a helical membrane-spanning segment. Over 353-363 (LLLKDEYEAMS) the chain is Extracellular. Residues 364 to 389 (FVCIVAILVYVAFFEIGPGPIPWFIV) traverse the membrane as a helical segment. Residues glutamate 378 and tryptophan 386 each coordinate D-glucose. Topologically, residues 390–399 (AELFSQGPRP) are cytoplasmic. Residues 400–420 (AAMAVAGCSNWTSNFLVGMFF) traverse the membrane as a helical segment. The Extracellular segment spans residues 421 to 429 (PSAAAYLGA). A helical membrane pass occupies residues 430 to 450 (YVFIIFAAFLVFFLIFTSFKV). Topologically, residues 451–493 (PETKGRTFEDITRAFEGQAHSGKGSAGVELNSMQPVKETPGNA) are cytoplasmic. 3 positions are modified to phosphoserine: serine 471, serine 475, and serine 482. Threonine 489 carries the post-translational modification Phosphothreonine.

The protein belongs to the major facilitator superfamily. Sugar transporter (TC 2.A.1.1) family. Glucose transporter subfamily. As to quaternary structure, interacts with SMIM43; the interaction may promote SLC2A3-mediated glucose transport to meet the energy needs of mesendoderm differentiation. As to expression, brain and osteoblastic cells (at protein level). Highly expressed in brain.

Its subcellular location is the cell membrane. The protein localises to the perikaryon. It localises to the cell projection. The catalysed reaction is D-glucose(out) = D-glucose(in). The enzyme catalyses D-galactose(in) = D-galactose(out). Its activity is regulated as follows. Deoxyglucose transport is inhibited by D-glucose, D-galactose and maltose. Galactose transport is inhibited by D-glucose and maltose. In terms of biological role, facilitative glucose transporter. Can also mediate the uptake of various other monosaccharides across the cell membrane. Mediates the uptake of glucose, 2-deoxyglucose, galactose, mannose, xylose and fucose, and probably also dehydroascorbate. Does not mediate fructose transport. Required for mesendoderm differentiation. The sequence is that of Solute carrier family 2, facilitated glucose transporter member 3 from Rattus norvegicus (Rat).